The following is a 231-amino-acid chain: Very-long-chain (3R)-3-hydroxyacyl-CoA dehydratase 4 (231 aa).

Residues 1–19 (MGPVALPTWLQPRYRKNAY) are Cytoplasmic-facing. The helical transmembrane segment at 20–40 (LFIYYLIQFCGHSWIFTNMTV) threads the bilayer. The Lumenal portion of the chain corresponds to 41–56 (RFFSFGKDSMVDTFYA). The chain crosses the membrane as a helical span at residues 57 to 77 (IGLVMQLCQSISLLELLHIYV). Residues 78–112 (GIESNHLLPRILQLTERIIVLFMVITSQEEVQEKY) are Cytoplasmic-facing. A helical membrane pass occupies residues 113-133 (VVCVLFIFRNLLDMVRYTYSM). Topologically, residues 134–135 (LS) are lumenal. A helical transmembrane segment spans residues 136-156 (VIGISYAVLTWFSQTLWMPIY). Residue Tyr156 is part of the active site. Position 157 (Pro157) is a topological domain, cytoplasmic. The chain crosses the membrane as a helical span at residues 158 to 178 (LCVLAEAFTIYQSLPYFESFG). Residue Glu163 is part of the active site. The Lumenal portion of the chain corresponds to 179–189 (TYSTKLPFDLS). A helical membrane pass occupies residues 190–210 (FYFPYVLKIYLMMLFVGMYFT). Topologically, residues 211–231 (YNHLYSERRDILRVFPNKKKM) are cytoplasmic.

Belongs to the very long-chain fatty acids dehydratase HACD family. In terms of assembly, may interact with enzymes of the ELO family (including ELOVL1); with those enzymes that mediate condensation, the first of the four steps of the reaction cycle responsible for fatty acids elongation, may be part of a larger fatty acids elongase complex.

It localises to the endoplasmic reticulum membrane. The catalysed reaction is a very-long-chain (3R)-3-hydroxyacyl-CoA = a very-long-chain (2E)-enoyl-CoA + H2O. It catalyses the reaction (3R)-hydroxyhexadecanoyl-CoA = (2E)-hexadecenoyl-CoA + H2O. It functions in the pathway lipid metabolism; fatty acid biosynthesis. Its function is as follows. Catalyzes the third of the four reactions of the long-chain fatty acids elongation cycle. This endoplasmic reticulum-bound enzymatic process, allows the addition of two carbons to the chain of long- and very long-chain fatty acids/VLCFAs per cycle. This enzyme catalyzes the dehydration of the 3-hydroxyacyl-CoA intermediate into trans-2,3-enoyl-CoA, within each cycle of fatty acid elongation. Thereby, it participates in the production of VLCFAs of different chain lengths that are involved in multiple biological processes as precursors of membrane lipids and lipid mediators. This chain is Very-long-chain (3R)-3-hydroxyacyl-CoA dehydratase 4, found in Bos taurus (Bovine).